The primary structure comprises 1558 residues: MTADKDKDKDKEKDRDRDRDRERDKRDKARESENARPRRSCTLEGGAKNYAESDHSEDEDNDNNSATTEESNKKSRKKPPKKKSRYERTDTGEITSYITEDDVVYRPGDCVYIESRRPNTPYFICSIQDFKLVHSSQACCRSPAPAFCDPPACSLPVAPQPPQHLSEAGRGPGGSKRDHLLMNVKWYYRQSEVPDSVYQHLVQDRHNENDSGRELVITDPVIKNRELFISDYVDTYHAAALRGKCNISHFSDIFAAREFKARVDSFFYILGYNPETRRLNSTQGEIRVGPSHQAKLPDLQPFPSPDGDTVTQHEELVWMPGVSDCDLLMYLRAARSMAAFAGMCDGGSTEDGCVAASRDDTTLNALNTLHESSYDAGKALQRLVKKPVPKLIEKCWTEDEVKRFVKGLRQYGKNFFRIRKELLPSKETGELITFYYYWKKTPEAASSRAHRRHRRQAVFRRIKTRTASTPVNTPSRPPSSEFLDLSSASEDDFDSEDSEQELKGYACRHCFTTTSKDWHHGGRENILLCTDCRIHFKKYGELPPIEKPVDPPPFMFKPVKEEDDGLSGKHSMRTRRSRGSMSTLRSGRKKQPTSPDGRASPINEDIRSSGRNSPSAASTSSNDSKAETVKKSAKKVKEEAASPLKSTKRQREKVASDTEDTDRITSKKTKTQEISRPNSPSEGEGESSDSRSVNDEGSSDPKDIDQDNRSTSPSIPSPQDNESDSDSSAQQQMLQAQPPALQAPSGAASAPSTAPPGTPQLPTQGPTPSATAVPPQGSPATSQPPNQTQSTVAPAAHTHIQQAPTLHPPRLPSPHPPLQPMTAPPSQSSAQPHPQPSLHSQGPPGPHSLQTGPLLQHPGPPQPFGLPSQPSQGQGPLGPSPAAAHPHSTIQLPASQSALQPQQPPREQPLPPAPLAMPHIKPPPTTPIPQLPAPQAHKHPPHLSGPSPFSLNANLPPPPALKPLSSLSTHHPPSAHPPPLQLMPQSQPLPSSPAQPPGLTQSQSLPPPAASHPTTGLHQVPSQSPFPQHPFVPGGPPPITPPSCPPTSTPPAGPSSSSQPPCSAAVSSGGSVPGAPSCPLPAVQIKEEALDEAEEPESPPPPPRSPSPEPTVVDTPSHASQSARFYKHLDRGYNSCARTDLYFMPLAGSKLAKKREEAIEKAKREAEQKAREEREREKEKEKEREREREREREAERAAKASSSAHEGRLSDPQLSGPGHMRPSFEPPPTTIAAVPPYIGPDTPALRTLSEYARPHVMSPTNRNHPFYMPLNPTDPLLAYHMPGLYNVDPTIRERELREREIREREIRERELRERMKPGFEVKPPELDPLHPATNPMEHFARHSALTIPPAAGPHPFASFHPGLNPLERERLALAGPQLRPEMSYPDRLAAERIHAERMASLTSDPLARLQMFNVTPHHHQHSHIHSHLHLHQQDPLHQGSAGPVHPLVDPLTAGPHLARFPYPPGTLPNPLLGQPPHEHEMLRHPVFGTPYPRDLPGAIPPPMSAAHQLQAMHAQSAELQRLAMEQQWLHGHPHMHGGHLPSQEDYYSRLKKEGDKQL.

The span at 1–36 shows a compositional bias: basic and acidic residues; sequence MTADKDKDKDKEKDRDRDRDRERDKRDKARESENAR. The tract at residues 1-90 is disordered; that stretch reads MTADKDKDKD…KKKSRYERTD (90 aa). A phosphoserine mark is found at Ser53 and Ser56. Over residues 74-85 the composition is skewed to basic residues; sequence KSRKKPPKKKSR. One can recognise a BAH domain in the interval 103-283; it reads VVYRPGDCVY…PETRRLNSTQ (181 aa). Residue Thr120 is modified to Phosphothreonine. A phosphoserine mark is found at Ser142 and Ser304. Residues 284 to 387 enclose the ELM2 domain; sequence GEIRVGPSHQ…KALQRLVKKP (104 aa). The region spanning 391–443 is the SANT domain; that stretch reads LIEKCWTEDEVKRFVKGLRQYGKNFFRIRKELLPSKETGELITFYYYWKKTPE. The segment at 464-495 is disordered; sequence TRTASTPVNTPSRPPSSEFLDLSSASEDDFDS. Residues 465–474 are compositionally biased toward polar residues; that stretch reads RTASTPVNTP. Low complexity predominate over residues 479–488; it reads SSEFLDLSSA. The segment at 507–532 adopts a GATA-type zinc-finger fold; it reads CRHCFTTTSKDWHHGGRENILLCTDC. Residues 542-1125 form a disordered region; the sequence is LPPIEKPVDP…PSHASQSARF (584 aa). Lys560 participates in a covalent cross-link: Glycyl lysine isopeptide (Lys-Gly) (interchain with G-Cter in SUMO2). Phosphothreonine is present on Thr593. 3 positions are modified to phosphoserine: Ser594, Ser600, and Ser613. Positions 609-623 are enriched in low complexity; the sequence is SGRNSPSAASTSSND. The span at 624–640 shows a compositional bias: basic and acidic residues; the sequence is SKAETVKKSAKKVKEEA. Lys637 is covalently cross-linked (Glycyl lysine isopeptide (Lys-Gly) (interchain with G-Cter in SUMO2)). Ser642, Ser656, Ser675, and Ser679 each carry phosphoserine. A compositionally biased stretch (basic and acidic residues) spans 652-673; it reads EKVASDTEDTDRITSKKTKTQE. Residues 688–708 show a composition bias toward basic and acidic residues; it reads SDSRSVNDEGSSDPKDIDQDN. Residues 709 to 720 are compositionally biased toward polar residues; it reads RSTSPSIPSPQD. The span at 726–752 shows a compositional bias: low complexity; that stretch reads DSSAQQQMLQAQPPALQAPSGAASAPS. A compositionally biased stretch (polar residues) spans 778–792; sequence SPATSQPPNQTQSTV. A compositionally biased stretch (pro residues) spans 806 to 823; it reads LHPPRLPSPHPPLQPMTA. Low complexity-rich tracts occupy residues 824-857, 865-874, and 891-901; these read PPSQ…LLQH, GLPSQPSQGQ, and QLPASQSALQP. Over residues 902 to 932 the composition is skewed to pro residues; it reads QQPPREQPLPPAPLAMPHIKPPPTTPIPQLP. The segment covering 962 to 972 has biased composition (low complexity); that stretch reads KPLSSLSTHHP. Over residues 1012-1023 the composition is skewed to polar residues; that stretch reads HPTTGLHQVPSQ. The segment covering 1027–1053 has biased composition (pro residues); sequence PQHPFVPGGPPPITPPSCPPTSTPPAG. Residues 1054–1077 are compositionally biased toward low complexity; it reads PSSSSQPPCSAAVSSGGSVPGAPS. Ser1098, Ser1105, and Ser1107 each carry phosphoserine. Over residues 1098–1109 the composition is skewed to pro residues; that stretch reads SPPPPPRSPSPE. Residue Thr1111 is modified to Phosphothreonine. A coiled-coil region spans residues 1148-1203; the sequence is GSKLAKKREEAIEKAKREAEQKAREEREREKEKEKEREREREREREAERAAKASSS. Lys1150 carries the post-translational modification N6-acetyllysine. The segment covering 1154-1198 has biased composition (basic and acidic residues); sequence KREEAIEKAKREAEQKAREEREREKEKEKEREREREREREAERAA. Residues 1154-1238 are disordered; that stretch reads KREEAIEKAK…TTIAAVPPYI (85 aa). Tyr1251 bears the Phosphotyrosine mark. Ser1258 is subject to Phosphoserine.

Interacts with HDAC1 and ATN1. Interaction with ATN1 is improved when the poly-Gln region of ATN1 is extended. Interacts with FAT1.

It is found in the nucleus. Its subcellular location is the PML body. In terms of biological role, plays a role as a transcriptional repressor during development. May play a role in the control of cell survival. The sequence is that of Arginine-glutamic acid dipeptide repeats protein (Rere) from Mus musculus (Mouse).